We begin with the raw amino-acid sequence, 412 residues long: Divalent metal cation transporter MntH (412 aa).

At 1-19 (MTNYRVESSSGRAARKMRL) the chain is on the cytoplasmic side. A helical membrane pass occupies residues 20–39 (ALMGPAFIAAIGYIDPGNFA). Residues 40 to 51 (TNIQAGASFGYQ) lie on the Periplasmic side of the membrane. Residues 52–71 (LLWVVVWANLMAMLIQILSA) form a helical membrane-spanning segment. At 72-95 (KLGIATGKNLAEQIRDHYPRPVVW) the chain is on the cytoplasmic side. Residues 96-118 (FYWVQAEIIAMATDLAEFIGAAI) traverse the membrane as a helical segment. Residues 119–125 (GFKLILG) are Periplasmic-facing. Residues 126–145 (VSLLQGAVLTGIATFLILML) traverse the membrane as a helical segment. Residues 146–155 (QRRGQKPLEK) are Cytoplasmic-facing. The chain crosses the membrane as a helical span at residues 156 to 175 (VIGGLLLFVAAAYIVELIFS). Residues 176–196 (QPNLAQLGKGMVIPSLPTSEA) are Periplasmic-facing. A helical transmembrane segment spans residues 197-220 (VFLAAGVLGATIMPHVIYLHSSLT). The Cytoplasmic portion of the chain corresponds to 221–238 (QHLHGGSRQQRYSATKWD). The helical transmembrane segment at 239-258 (VAIAMTIAGFVNLAMMATAA) threads the bilayer. At 259–276 (AAFHFSGHTGVADLDEAY) the chain is on the periplasmic side. Residues 277–297 (LTLQPLLSHAAATVFGLSLVA) traverse the membrane as a helical segment. Over 298–327 (AGLSSTVVGTLAGQVVMQGFIRFHIPLWVR) the chain is Cytoplasmic. A helical membrane pass occupies residues 328–344 (RTVTMLPSFIVILMGLD). Residues 345–350 (PTRILV) lie on the Periplasmic side of the membrane. A helical membrane pass occupies residues 351–370 (MSQVLLSFGIALALVPLLIF). The Cytoplasmic segment spans residues 371–387 (TSDSKLMGDLVNSKRVK). Residues 388-406 (QTGWVIVVLVVALNIWLLV) form a helical membrane-spanning segment. The Periplasmic portion of the chain corresponds to 407–412 (GTALGL).

It belongs to the NRAMP family.

It is found in the cell inner membrane. Its function is as follows. H(+)-stimulated, divalent metal cation uptake system. This chain is Divalent metal cation transporter MntH, found in Escherichia fergusonii (strain ATCC 35469 / DSM 13698 / CCUG 18766 / IAM 14443 / JCM 21226 / LMG 7866 / NBRC 102419 / NCTC 12128 / CDC 0568-73).